We begin with the raw amino-acid sequence, 444 residues long: MTGKSPEVIPHTPVVQDLRAAREIFWINPHYRATKEFKEAQFGISLSDIHDAEERLRRFAPYLAKAFPETQPAQGLIESPIVPIKRMQSYLESRYGVQIPGDIWLKCDHQLPISGSIKARGGIYEVLKHAEETLIKQGLLTREDDYARLKDSSFRDVLSHYKIAVGSTGNLGLSIGVMGAELGFKVTVHMSADAKGWKKALLRSKGVEVIEYTSDYSKAVEEGRRQAEGDSRCHFIDDENSRDLFLGYAVAGLRLKEQLEKLNRKVDADHPLFVYLPCGVGGGPGGVTFGLKQVFQEHVHCFFAEPTHSPCMVLGLATGLHDGIAVQDIGLDNKTEADGLAVGRASRFVGKIMAGLLSGAFTVEDAELFRLLQALDHAEGIQCEPSALAGMAGPARLLLCKEGLQYIREHRLEEGLKRGTHLIWATGGSLVPVEVMKDYLSRGK.

Position 118 is an N6-(pyridoxal phosphate)lysine (K118).

Belongs to the serine/threonine dehydratase family. DsdA subfamily. Pyridoxal 5'-phosphate serves as cofactor.

The catalysed reaction is D-serine = pyruvate + NH4(+). The chain is Probable D-serine dehydratase from Desulfitobacterium hafniense (strain Y51).